The primary structure comprises 375 residues: Histidine biosynthesis bifunctional protein HisB (375 aa).

Positions 1–168 are histidinol-phosphatase; the sequence is MTPIVFIDRD…GIAHTLADAP (168 aa). Aspartate 8 functions as the Nucleophile in the catalytic mechanism. Residues aspartate 8, aspartate 10, and aspartate 128 each coordinate Mg(2+). The Proton donor role is filled by aspartate 10. The tract at residues 169–375 is imidazoleglycerol-phosphate dehydratase; sequence RRAVVQRHTK…HVLPSTKGAL (207 aa).

This sequence in the N-terminal section; belongs to the histidinol-phosphatase family. In the C-terminal section; belongs to the imidazoleglycerol-phosphate dehydratase family. Mg(2+) serves as cofactor.

The protein resides in the cytoplasm. The catalysed reaction is D-erythro-1-(imidazol-4-yl)glycerol 3-phosphate = 3-(imidazol-4-yl)-2-oxopropyl phosphate + H2O. The enzyme catalyses L-histidinol phosphate + H2O = L-histidinol + phosphate. Its pathway is amino-acid biosynthesis; L-histidine biosynthesis; L-histidine from 5-phospho-alpha-D-ribose 1-diphosphate: step 6/9. It functions in the pathway amino-acid biosynthesis; L-histidine biosynthesis; L-histidine from 5-phospho-alpha-D-ribose 1-diphosphate: step 8/9. This is Histidine biosynthesis bifunctional protein HisB from Xylella fastidiosa (strain Temecula1 / ATCC 700964).